Reading from the N-terminus, the 164-residue chain is Protein-export protein SecB (164 aa).

It belongs to the SecB family. In terms of assembly, homotetramer, a dimer of dimers. One homotetramer interacts with 1 SecA dimer.

Its subcellular location is the cytoplasm. Functionally, one of the proteins required for the normal export of preproteins out of the cell cytoplasm. It is a molecular chaperone that binds to a subset of precursor proteins, maintaining them in a translocation-competent state. It also specifically binds to its receptor SecA. In Rhodopseudomonas palustris (strain BisB18), this protein is Protein-export protein SecB.